Consider the following 311-residue polypeptide: HPr kinase/phosphorylase (311 aa).

Catalysis depends on residues histidine 136 and lysine 157. 151–158 provides a ligand contact to ATP; the sequence is GDSGIGKS. Position 158 (serine 158) interacts with Mg(2+). The Proton acceptor; for phosphorylation activity. Proton donor; for dephosphorylation activity role is filled by aspartate 175. The tract at residues 199–208 is important for the catalytic mechanism of both phosphorylation and dephosphorylation; sequence LEIRGLGIIN. A Mg(2+)-binding site is contributed by glutamate 200. The active site involves arginine 241. Residues 262–267 are important for the catalytic mechanism of dephosphorylation; it reads PVRPGR.

This sequence belongs to the HPrK/P family. Homohexamer. Mg(2+) serves as cofactor.

It catalyses the reaction [HPr protein]-L-serine + ATP = [HPr protein]-O-phospho-L-serine + ADP + H(+). The catalysed reaction is [HPr protein]-O-phospho-L-serine + phosphate + H(+) = [HPr protein]-L-serine + diphosphate. Catalyzes the ATP- as well as the pyrophosphate-dependent phosphorylation of a specific serine residue in HPr, a phosphocarrier protein of the phosphoenolpyruvate-dependent sugar phosphotransferase system (PTS). HprK/P also catalyzes the pyrophosphate-producing, inorganic phosphate-dependent dephosphorylation (phosphorolysis) of seryl-phosphorylated HPr (P-Ser-HPr). The two antagonistic activities of HprK/P are regulated by several intracellular metabolites, which change their concentration in response to the absence or presence of rapidly metabolisable carbon sources (glucose, fructose, etc.) in the growth medium. Therefore, by controlling the phosphorylation state of HPr, HPrK/P is a sensor enzyme that plays a major role in the regulation of carbon metabolism and sugar transport: it mediates carbon catabolite repression (CCR), and regulates PTS-catalyzed carbohydrate uptake and inducer exclusion. This chain is HPr kinase/phosphorylase, found in Staphylococcus haemolyticus (strain JCSC1435).